We begin with the raw amino-acid sequence, 479 residues long: Spindly-like protein spdl-1 (479 aa).

Coiled coils occupy residues 4–180 (DEEK…EGEL), 210–250 (EEDL…RFNV), and 321–357 (LMKDNEKYVTIIRGLQQEVENLKADIVQLQFDNKCAH).

As to quaternary structure, interacts with Zwilch homolog zwl-1, a component of the RZZ complex. Interacts with mdf-1 and mdf-2.

It localises to the chromosome. It is found in the centromere. The protein localises to the kinetochore. The protein resides in the cytoplasm. Its subcellular location is the cytoskeleton. It localises to the spindle pole. Transient kinetochore component required for chromosome and spindle pole alignment and chromosome segregation during mitosis. Functions downstream of the RZZ complex to mediate kinetochore-microtubule attachments and nuclear envelope breakdown during cell division. Required for kinetochore assembly and localizes the checkpoint proteins mdf-1 and mdf-2, dynein and dynactin to unattached kinetochores. Dynein is believed to control the initial lateral interaction between the kinetochore and spindle microtubules and to facilitate the subsequent formation of end-on kinetochore-microtubule attachments mediated by the NDC80 complex. Required for embryonic development. In Caenorhabditis elegans, this protein is Spindly-like protein spdl-1.